The sequence spans 165 residues: Large ribosomal subunit protein uL5 (165 aa).

The protein belongs to the universal ribosomal protein uL5 family. In terms of assembly, part of the 50S ribosomal subunit; contacts the 5S rRNA and probably tRNA. Forms a bridge to the 30S subunit in the 70S ribosome.

Functionally, this is one of the proteins that bind and probably mediate the attachment of the 5S RNA into the large ribosomal subunit, where it forms part of the central protuberance. In the 70S ribosome it contacts protein S13 of the 30S subunit (bridge B1b), connecting the 2 subunits; this bridge is implicated in subunit movement. May contact the P site tRNA; the 5S rRNA and some of its associated proteins might help stabilize positioning of ribosome-bound tRNAs. The polypeptide is Large ribosomal subunit protein uL5 (Methanosarcina acetivorans (strain ATCC 35395 / DSM 2834 / JCM 12185 / C2A)).